We begin with the raw amino-acid sequence, 127 residues long: Thioredoxin (127 aa).

The 114-residue stretch at 2 to 115 folds into the Thioredoxin domain; it reads SDGVKHINSA…LRAAAEKMGR (114 aa). Residues cysteine 33 and cysteine 36 each act as nucleophile in the active site. Cysteine 33 and cysteine 36 are joined by a disulfide.

This sequence belongs to the thioredoxin family.

In terms of biological role, participates in various redox reactions through the reversible oxidation of its active center dithiol to a disulfide and catalyzes dithiol-disulfide exchange reactions. The chain is Thioredoxin (trx) from Neurospora crassa (strain ATCC 24698 / 74-OR23-1A / CBS 708.71 / DSM 1257 / FGSC 987).